The primary structure comprises 151 residues: Small ribosomal subunit protein uS9 (151 aa).

The span at 1-19 (MTETTPAPQTPAAPAGPAQ) shows a compositional bias: low complexity. Disordered regions lie at residues 1–20 (MTET…PAQS) and 121–151 (KAGF…YSKR). A compositionally biased stretch (basic and acidic residues) spans 127–136 (RDPRATERKK). Positions 137 to 151 (YGLKKARKAPQYSKR) are enriched in basic residues.

Belongs to the universal ribosomal protein uS9 family.

The chain is Small ribosomal subunit protein uS9 (rpsI) from Mycobacterium bovis (strain ATCC BAA-935 / AF2122/97).